Reading from the N-terminus, the 124-residue chain is uncharacterized protein (124 aa).

A signal peptide spans 1–18 (MHIIKTLISVGVAFSLSA). Residue cysteine 19 is the site of N-palmitoyl cysteine attachment. A lipid anchor (S-diacylglycerol cysteine) is attached at cysteine 19.

The protein resides in the cell membrane. This is an uncharacterized protein from Pasteurella multocida (strain Pm70).